An 82-amino-acid chain; its full sequence is Defensin-like protein 208 (82 aa).

The first 29 residues, 1–29 (MAKNLNTVSFTVLLLVLLMASTGILETEA), serve as a signal peptide directing secretion. Cystine bridges form between Cys-38-Cys-63, Cys-50-Cys-76, and Cys-54-Cys-78.

The protein belongs to the DEFL family.

Its subcellular location is the secreted. In Arabidopsis thaliana (Mouse-ear cress), this protein is Defensin-like protein 208.